The chain runs to 181 residues: Ribosome maturation factor RimM (181 aa).

Positions E98–L177 constitute a PRC barrel domain.

Belongs to the RimM family. As to quaternary structure, binds ribosomal protein uS19.

The protein localises to the cytoplasm. An accessory protein needed during the final step in the assembly of 30S ribosomal subunit, possibly for assembly of the head region. Essential for efficient processing of 16S rRNA. May be needed both before and after RbfA during the maturation of 16S rRNA. It has affinity for free ribosomal 30S subunits but not for 70S ribosomes. This Helicobacter pylori (strain J99 / ATCC 700824) (Campylobacter pylori J99) protein is Ribosome maturation factor RimM.